The chain runs to 371 residues: Alanine dehydrogenase (371 aa).

Residues arginine 15 and lysine 75 each coordinate substrate. Residue histidine 96 is the Proton donor/acceptor of the active site. NAD(+) is bound by residues serine 134, 178–179, aspartate 198, lysine 203, serine 220, 239–240, 267–270, arginine 279, and 298–301; these read TA, VL, IAID, and VANM. Aspartate 270 acts as the Proton donor/acceptor in catalysis. 2 residues coordinate Mg(2+): glutamate 323 and histidine 327.

This sequence belongs to the AlaDH/PNT family. As to quaternary structure, homohexamer. Trimer of dimers. It depends on Mg(2+) as a cofactor.

It localises to the secreted. The enzyme catalyses L-alanine + NAD(+) + H2O = pyruvate + NH4(+) + NADH + H(+). Its pathway is amino-acid degradation; L-alanine degradation via dehydrogenase pathway; NH(3) and pyruvate from L-alanine: step 1/1. Inhibited by CuSO(4) and ZnCl(2). Its function is as follows. Catalyzes the reversible reductive amination of pyruvate to L-alanine. However, since the physiological environment of M.tuberculosis has a neutral pH, it can be assumed that the enzyme catalyzes exclusively the formation of L-alanine. May play a role in cell wall synthesis as L-alanine is an important constituent of the peptidoglycan layer. The protein is Alanine dehydrogenase (ald) of Mycobacterium tuberculosis (strain ATCC 25618 / H37Rv).